We begin with the raw amino-acid sequence, 306 residues long: tRNA dimethylallyltransferase 1 (306 aa).

Residue 13 to 20 (GPTASGKT) participates in ATP binding. 15-20 (TASGKT) contributes to the substrate binding site. The interaction with substrate tRNA stretch occupies residues 38–41 (DSRQ).

The protein belongs to the IPP transferase family. In terms of assembly, monomer. Requires Mg(2+) as cofactor.

The enzyme catalyses adenosine(37) in tRNA + dimethylallyl diphosphate = N(6)-dimethylallyladenosine(37) in tRNA + diphosphate. Catalyzes the transfer of a dimethylallyl group onto the adenine at position 37 in tRNAs that read codons beginning with uridine, leading to the formation of N6-(dimethylallyl)adenosine (i(6)A). This chain is tRNA dimethylallyltransferase 1, found in Azobacteroides pseudotrichonymphae genomovar. CFP2.